A 269-amino-acid chain; its full sequence is Formamidopyrimidine-DNA glycosylase (269 aa).

Pro2 functions as the Schiff-base intermediate with DNA in the catalytic mechanism. The active-site Proton donor is the Glu3. The Proton donor; for beta-elimination activity role is filled by Lys57. Residues His90, Arg109, and Lys150 each contribute to the DNA site. The segment at 235–269 adopts an FPG-type zinc-finger fold; it reads QVYGRAGELCRRCGNVIEIAKHGQRSTFFCRHCQH. Residue Arg259 is the Proton donor; for delta-elimination activity of the active site.

This sequence belongs to the FPG family. In terms of assembly, monomer. Zn(2+) serves as cofactor.

It carries out the reaction Hydrolysis of DNA containing ring-opened 7-methylguanine residues, releasing 2,6-diamino-4-hydroxy-5-(N-methyl)formamidopyrimidine.. The catalysed reaction is 2'-deoxyribonucleotide-(2'-deoxyribose 5'-phosphate)-2'-deoxyribonucleotide-DNA = a 3'-end 2'-deoxyribonucleotide-(2,3-dehydro-2,3-deoxyribose 5'-phosphate)-DNA + a 5'-end 5'-phospho-2'-deoxyribonucleoside-DNA + H(+). Its function is as follows. Involved in base excision repair of DNA damaged by oxidation or by mutagenic agents. Acts as a DNA glycosylase that recognizes and removes damaged bases. Has a preference for oxidized purines, such as 7,8-dihydro-8-oxoguanine (8-oxoG). Has AP (apurinic/apyrimidinic) lyase activity and introduces nicks in the DNA strand. Cleaves the DNA backbone by beta-delta elimination to generate a single-strand break at the site of the removed base with both 3'- and 5'-phosphates. This Yersinia enterocolitica serotype O:8 / biotype 1B (strain NCTC 13174 / 8081) protein is Formamidopyrimidine-DNA glycosylase.